The chain runs to 491 residues: Ketol-acid reductoisomerase (NADP(+)) (491 aa).

Residues 17 to 208 (LGKCRFMSRD…GGHRAGVLES (192 aa)) enclose the KARI N-terminal Rossmann domain. NADP(+) is bound by residues 45-48 (CGAQ), Arg-68, Arg-76, Ser-78, and 108-110 (DKQ). His-132 is an active-site residue. Gly-158 lines the NADP(+) pocket. KARI C-terminal knotted domains follow at residues 209-344 (SFVA…NYPE) and 345-484 (YEGK…MTDM). Asp-217, Glu-221, Glu-389, and Glu-393 together coordinate Mg(2+). Ser-414 is a substrate binding site.

Belongs to the ketol-acid reductoisomerase family. Requires Mg(2+) as cofactor.

It catalyses the reaction (2R)-2,3-dihydroxy-3-methylbutanoate + NADP(+) = (2S)-2-acetolactate + NADPH + H(+). The catalysed reaction is (2R,3R)-2,3-dihydroxy-3-methylpentanoate + NADP(+) = (S)-2-ethyl-2-hydroxy-3-oxobutanoate + NADPH + H(+). It functions in the pathway amino-acid biosynthesis; L-isoleucine biosynthesis; L-isoleucine from 2-oxobutanoate: step 2/4. Its pathway is amino-acid biosynthesis; L-valine biosynthesis; L-valine from pyruvate: step 2/4. Its function is as follows. Involved in the biosynthesis of branched-chain amino acids (BCAA). Catalyzes an alkyl-migration followed by a ketol-acid reduction of (S)-2-acetolactate (S2AL) to yield (R)-2,3-dihydroxy-isovalerate. In the isomerase reaction, S2AL is rearranged via a Mg-dependent methyl migration to produce 3-hydroxy-3-methyl-2-ketobutyrate (HMKB). In the reductase reaction, this 2-ketoacid undergoes a metal-dependent reduction by NADPH to yield (R)-2,3-dihydroxy-isovalerate. This is Ketol-acid reductoisomerase (NADP(+)) from Proteus mirabilis (strain HI4320).